The chain runs to 537 residues: MVKKSENPKEWYNEIVRKANIIDDAYPVKGMPVYKPYGYKAFKFLMSLLENKLESIGAEPAWFPIVIPYSIFKKESEHIKGFEEEVFWIERAGNDKLEDPLILRPTSETEMYYMFAKWIESYRDLPLIIYMTNTVYRYETKSTKALIRGREVLWNETHSVHRSEEDAREHMAKAKEVYDYIFWDVLYLPYIWVRRPEWDKFPGGEETYAADAIMPDGRFLQVGTIHLLGQKFAIPFEIKFLDYHPFYKKYGDPNIYIKDKNGNEYKVHAPKEFWEELEKGKLTKTYTIKIGDKEYTISSIEEINEKLKEYDFRKYVWQTSYGISMRAFGGALYWLGDDLGLVMPYKIAPIQIVIIPILGKDDTKVIEYSKKVYELIKDKYRVYLDSDDTKTPGYKYYYYDLIGVPLRIDIGLKEVENNSITIVRRDNKKKYTISLNELEKIDQIFKEMEEDLKQKAKSFVNDMVVRVKTFDELKEAIEQNKIAKAPFCMRESCANQIKELLHAEVRGTDINPENAEKERCVYCGEPAKYWVYIGKTY.

It belongs to the class-II aminoacyl-tRNA synthetase family. ProS type 3 subfamily. In terms of assembly, homodimer.

The protein localises to the cytoplasm. It catalyses the reaction tRNA(Pro) + L-proline + ATP = L-prolyl-tRNA(Pro) + AMP + diphosphate. Catalyzes the attachment of proline to tRNA(Pro) in a two-step reaction: proline is first activated by ATP to form Pro-AMP and then transferred to the acceptor end of tRNA(Pro). The chain is Proline--tRNA ligase from Nanoarchaeum equitans (strain Kin4-M).